A 269-amino-acid chain; its full sequence is Protein IAL1 (269 aa).

The LOB domain maps to 32 to 133 (SPCAACKFLR…QDLARAKYEL (102 aa)).

It belongs to the LOB domain-containing protein family. In terms of tissue distribution, expressed in leaves, leaf primordia, immature ears, immature tassels, whole ovules, silk and husk leaves.

The protein resides in the nucleus. The sequence is that of Protein IAL1 from Zea mays (Maize).